Consider the following 358-residue polypeptide: Stearoyl-CoA desaturase 2 (358 aa).

Topologically, residues 1 to 71 (MPAHILQEIS…EGPPPKLEYV (71 aa)) are cytoplasmic. The tract at residues 14–43 (SATTTITAPPSGGQQNGGEKFEKNPHHWGA) is disordered. The segment covering 32–43 (EKFEKNPHHWGA) has biased composition (basic and acidic residues). A helical transmembrane segment spans residues 72 to 92 (WRNIVLMALLHIGALYGITLV). Asparagine 74 provides a ligand contact to substrate. The Lumenal portion of the chain corresponds to 93-96 (PSCK). A helical membrane pass occupies residues 97–117 (VYTCLFAYLYYVISALGITAG). The Cytoplasmic portion of the chain corresponds to 118–216 (AHRLWSHRTY…EKLVMFQRRY (99 aa)). The Fe cation site is built by histidine 119 and histidine 124. A Histidine box-1 motif is present at residues 119–124 (HRLWSH). Positions 147, 154, and 155 each coordinate substrate. Residues histidine 156, histidine 159, and histidine 160 each coordinate Fe cation. The Histidine box-2 signature appears at 156-160 (HRAHH). Residues arginine 187 and lysine 188 each contribute to the substrate site. Residues 217–236 (YKPGLLLMCFILPTLVPWYC) form a helical membrane-spanning segment. At 237–240 (WGET) the chain is on the lumenal side. The helical transmembrane segment at 241–262 (FVNSLCVSTFLRYAVVLNATWL) threads the bilayer. Tryptophan 261 serves as a coordination point for substrate. At 263–358 (VNSAAHLYGY…RTGEESCKSG (96 aa)) the chain is on the cytoplasmic side. Residues histidine 268, histidine 297, histidine 300, and histidine 301 each contribute to the Fe cation site. Residues 297–301 (HNYHH) carry the Histidine box-3 motif.

It belongs to the fatty acid desaturase type 1 family. It depends on Fe(2+) as a cofactor. Detected in brain and adipose tissue, and at much lower levels in testis. Detected in liver when rats are kept on a fat-free diet, but not when their food contains unsaturated fatty acids.

Its subcellular location is the endoplasmic reticulum membrane. The protein resides in the microsome membrane. The enzyme catalyses octadecanoyl-CoA + 2 Fe(II)-[cytochrome b5] + O2 + 2 H(+) = (9Z)-octadecenoyl-CoA + 2 Fe(III)-[cytochrome b5] + 2 H2O. It catalyses the reaction hexadecanoyl-CoA + 2 Fe(II)-[cytochrome b5] + O2 + 2 H(+) = (9Z)-hexadecenoyl-CoA + 2 Fe(III)-[cytochrome b5] + 2 H2O. Functionally, stearoyl-CoA desaturase that utilizes O(2) and electrons from reduced cytochrome b5 to introduce the first double bond into saturated fatty acyl-CoA substrates. Catalyzes the insertion of a cis double bond at the delta-9 position into fatty acyl-CoA substrates including palmitoyl-CoA and stearoyl-CoA. Gives rise to a mixture of 16:1 and 18:1 unsaturated fatty acids. Contributes to the biosynthesis of membrane phospholipids, cholesterol esters and triglycerides, especially during embryonic development and in neonates. Important for normal permeability barrier function of the skin in neonates. The sequence is that of Stearoyl-CoA desaturase 2 (Scd2) from Rattus norvegicus (Rat).